Consider the following 81-residue polypeptide: uncharacterized protein (81 aa).

The next 2 helical transmembrane spans lie at 4–24 and 61–81; these read IFKMSFAVIIIILALIAFNYT and NIYTAVFVWSVSLIGFTLHII.

It localises to the cell membrane. This is an uncharacterized protein from Bacillus subtilis (strain 168).